A 340-amino-acid polypeptide reads, in one-letter code: Glucokinase (340 aa).

17–22 (GDIGGT) contributes to the ATP binding site.

The protein belongs to the bacterial glucokinase family.

The protein localises to the cytoplasm. It carries out the reaction D-glucose + ATP = D-glucose 6-phosphate + ADP + H(+). The chain is Glucokinase from Allorhizobium ampelinum (strain ATCC BAA-846 / DSM 112012 / S4) (Agrobacterium vitis (strain S4)).